Consider the following 430-residue polypeptide: Serine--tRNA ligase (430 aa).

An L-serine-binding site is contributed by 237–239 (TAE). 268–270 (RSE) contacts ATP. L-serine is bound at residue E291. Residue 355–358 (EISS) participates in ATP binding. S391 lines the L-serine pocket.

It belongs to the class-II aminoacyl-tRNA synthetase family. Type-1 seryl-tRNA synthetase subfamily. As to quaternary structure, homodimer. The tRNA molecule binds across the dimer.

The protein localises to the cytoplasm. The catalysed reaction is tRNA(Ser) + L-serine + ATP = L-seryl-tRNA(Ser) + AMP + diphosphate + H(+). The enzyme catalyses tRNA(Sec) + L-serine + ATP = L-seryl-tRNA(Sec) + AMP + diphosphate + H(+). The protein operates within aminoacyl-tRNA biosynthesis; selenocysteinyl-tRNA(Sec) biosynthesis; L-seryl-tRNA(Sec) from L-serine and tRNA(Sec): step 1/1. Its function is as follows. Catalyzes the attachment of serine to tRNA(Ser). Is also able to aminoacylate tRNA(Sec) with serine, to form the misacylated tRNA L-seryl-tRNA(Sec), which will be further converted into selenocysteinyl-tRNA(Sec). The polypeptide is Serine--tRNA ligase (Klebsiella pneumoniae (strain 342)).